Reading from the N-terminus, the 258-residue chain is Putative gamma-secretase subunit APH-1C (258 aa).

7 consecutive transmembrane segments (helical) span residues 5–25 (VFFGCAFIAFGPAFALYLFTI), 32–52 (VIFLIAGAFFWLVSLLLSSMF), 71–91 (LLIFGALLSVCIQELFRLAYY), 116–136 (LLAYVSGLGFGIMSGVFSFVN), 161–181 (AFMTLVVIMLHVFWGVVFFDG), 187–207 (WYTLLTVLLTHLVVSTQTFLS), and 214–234 (LVTAYIIMVLMGIWAFYVAGG).

Belongs to the APH-1 family. Potential component of the gamma-secretase complex.

The protein localises to the membrane. Its function is as follows. Potential subunit of the gamma-secretase complex, an endoprotease complex that catalyzes the intramembrane cleavage of integral proteins such as Notch receptors and APP (amyloid-beta precursor protein). This chain is Putative gamma-secretase subunit APH-1C (Aph1c), found in Mus musculus (Mouse).